Here is a 251-residue protein sequence, read N- to C-terminus: uncharacterized protein (251 aa).

12-36 provides a ligand contact to NADP(+); it reads VVTGASSGIGEATARTLAAQGFHVV. Residue Ser-136 participates in substrate binding. Tyr-149 functions as the Proton acceptor in the catalytic mechanism.

The protein belongs to the short-chain dehydrogenases/reductases (SDR) family.

This is an uncharacterized protein from Mycobacterium tuberculosis (strain CDC 1551 / Oshkosh).